The sequence spans 665 residues: tRNA 5-methylaminomethyl-2-thiouridine biosynthesis bifunctional protein MnmC (665 aa).

The interval 1 to 243 (MSQTSLHHAR…KREMLAGERA (243 aa)) is tRNA (mnm(5)s(2)U34)-methyltransferase. The segment at 268 to 665 (IGGGIASAMT…RKLLKGKPLQ (398 aa)) is FAD-dependent cmnm(5)s(2)U34 oxidoreductase.

It in the N-terminal section; belongs to the methyltransferase superfamily. tRNA (mnm(5)s(2)U34)-methyltransferase family. In the C-terminal section; belongs to the DAO family. It depends on FAD as a cofactor.

Its subcellular location is the cytoplasm. The enzyme catalyses 5-aminomethyl-2-thiouridine(34) in tRNA + S-adenosyl-L-methionine = 5-methylaminomethyl-2-thiouridine(34) in tRNA + S-adenosyl-L-homocysteine + H(+). Catalyzes the last two steps in the biosynthesis of 5-methylaminomethyl-2-thiouridine (mnm(5)s(2)U) at the wobble position (U34) in tRNA. Catalyzes the FAD-dependent demodification of cmnm(5)s(2)U34 to nm(5)s(2)U34, followed by the transfer of a methyl group from S-adenosyl-L-methionine to nm(5)s(2)U34, to form mnm(5)s(2)U34. The sequence is that of tRNA 5-methylaminomethyl-2-thiouridine biosynthesis bifunctional protein MnmC from Aeromonas hydrophila subsp. hydrophila (strain ATCC 7966 / DSM 30187 / BCRC 13018 / CCUG 14551 / JCM 1027 / KCTC 2358 / NCIMB 9240 / NCTC 8049).